Reading from the N-terminus, the 611-residue chain is Protein Pixie (611 aa).

2 4Fe-4S ferredoxin-type domains span residues 15–45 (RIAI…MGKL) and 54–83 (KIAS…IINL). 2 ABC transporter domains span residues 78-323 (ITII…FLDG) and 350-570 (IKRM…LELL). ATP-binding positions include 118 to 125 (GQNGIGKS) and 387 to 394 (GENGTGKT).

Belongs to the ABC transporter superfamily. ABCE family. As to quaternary structure, interacts with components of eIF3 complex, namely eIF3a, eIF3j, eIF3b, eIF3c and eIF3i. Associates with the 40S ribosome subunit in an ATP-dependent manner and independently from the presence of the eIF3 complex. Forms a complex with Git and Pak; the interaction with Pak may be mediated by pix/dPIX. Post-translationally, ubiquitinated by Cnot4. Ubiquitination mediates the recruitment of autophagy receptors to the mitochondrial outer membrane and initiates mitophagy. Expressed in early and late larval imaginal disks (at protein level).

It is found in the cytoplasm. Its function is as follows. Plays a role in translation initiation and quality control of translation. Together with pelo and HBS1, is required for 48S complex formation from 80S ribosomes and dissociation of vacant 80S ribosomes. Stabilizes core components of eIF3 complex promoting their assembly into translation initiation-competent complexes. Together with pelo and HBS1, recognizes stalled ribosomes and promotes dissociation of elongation complexes assembled on non-stop mRNAs; this triggers endonucleolytic cleavage of the mRNA, a mechanism to release non-functional ribosomes and to degrade damaged mRNAs as part of the No-Go Decay (NGD) pathway. Plays a role in the regulation of mRNA turnover. Plays a role in quality control of translation of mitochondrial outer membrane-localized mRNA. As part of the Pink1-regulated signaling, ubiquitinated by Cnot4 upon mitochondria damage; this modification generates polyubiquitin signals that recruits autophagy receptors to the mitochondrial outer membrane to initiate mitophagy. Required in the wing disk for cell division and growth as well as cell survival. During muscle embryogenesis, required for the recruitment of Pak to muscle attachments in the embryo, hence may play a role in proper muscle morphogenesis and proper guidance and targeting of subsets of myotubes. The polypeptide is Protein Pixie (Drosophila melanogaster (Fruit fly)).